A 308-amino-acid polypeptide reads, in one-letter code: Probable manganese-dependent inorganic pyrophosphatase (308 aa).

Positions 9, 13, 15, 74, 96, and 148 each coordinate Mn(2+).

This sequence belongs to the PPase class C family. Mn(2+) is required as a cofactor.

Its subcellular location is the cytoplasm. It carries out the reaction diphosphate + H2O = 2 phosphate + H(+). In Oceanobacillus iheyensis (strain DSM 14371 / CIP 107618 / JCM 11309 / KCTC 3954 / HTE831), this protein is Probable manganese-dependent inorganic pyrophosphatase.